The primary structure comprises 281 residues: Putative phosphatase/phosphodiesterase MPN_349 (281 aa).

Fe cation is bound by residues aspartate 12, glutamate 43, asparagine 44, and asparagine 71. The Proton donor role is filled by histidine 72. The Fe cation site is built by histidine 158, histidine 183, and histidine 185.

The protein belongs to the YmdB-like family. It depends on Fe(3+) as a cofactor.

The chain is Putative phosphatase/phosphodiesterase MPN_349 from Mycoplasma pneumoniae (strain ATCC 29342 / M129 / Subtype 1) (Mycoplasmoides pneumoniae).